Consider the following 442-residue polypeptide: 23S rRNA (uracil(1939)-C(5))-methyltransferase RlmD (442 aa).

The TRAM domain occupies 12 to 70 (SKQLSAKVTLEVTKLDHLGAGMAQHQGKIVFIPGALPNEKVTVQLTEQKKRHARAKLLK). Residues cysteine 83, cysteine 89, cysteine 92, and cysteine 171 each coordinate [4Fe-4S] cluster. S-adenosyl-L-methionine contacts are provided by glutamine 276, phenylalanine 305, asparagine 310, glutamate 326, aspartate 353, and aspartate 373. Residue cysteine 399 is the Nucleophile of the active site.

The protein belongs to the class I-like SAM-binding methyltransferase superfamily. RNA M5U methyltransferase family. RlmD subfamily.

It catalyses the reaction uridine(1939) in 23S rRNA + S-adenosyl-L-methionine = 5-methyluridine(1939) in 23S rRNA + S-adenosyl-L-homocysteine + H(+). In terms of biological role, catalyzes the formation of 5-methyl-uridine at position 1939 (m5U1939) in 23S rRNA. This chain is 23S rRNA (uracil(1939)-C(5))-methyltransferase RlmD, found in Shewanella sediminis (strain HAW-EB3).